A 101-amino-acid polypeptide reads, in one-letter code: Protein translation factor SUI1 homolog (101 aa).

The protein belongs to the SUI1 family.

This chain is Protein translation factor SUI1 homolog, found in Methanoregula boonei (strain DSM 21154 / JCM 14090 / 6A8).